A 176-amino-acid polypeptide reads, in one-letter code: RNA pyrophosphohydrolase (176 aa).

In terms of domain architecture, Nudix hydrolase spans 8 to 159 (PYRTCVGMML…KRPVYERVVK (152 aa)). A Nudix box motif is present at residues 47–68 (GGVDPGEDTWAAAKRELYEETS).

This sequence belongs to the Nudix hydrolase family. RppH subfamily. A divalent metal cation serves as cofactor.

In terms of biological role, accelerates the degradation of transcripts by removing pyrophosphate from the 5'-end of triphosphorylated RNA, leading to a more labile monophosphorylated state that can stimulate subsequent ribonuclease cleavage. The polypeptide is RNA pyrophosphohydrolase (Rhodopseudomonas palustris (strain BisA53)).